A 299-amino-acid polypeptide reads, in one-letter code: Ethylmalonyl-CoA decarboxylase (299 aa).

The protein belongs to the enoyl-CoA hydratase/isomerase family.

The protein resides in the cytoplasm. Its subcellular location is the cytosol. The catalysed reaction is (2S)-ethylmalonyl-CoA + H(+) = butanoyl-CoA + CO2. The enzyme catalyses (S)-methylmalonyl-CoA + H(+) = propanoyl-CoA + CO2. It catalyses the reaction (2R)-ethylmalonyl-CoA + H(+) = butanoyl-CoA + CO2. In terms of biological role, decarboxylates ethylmalonyl-CoA, a potentially toxic metabolite, to form butyryl-CoA, suggesting it might be involved in metabolite proofreading. Acts preferentially on (S)-ethylmalonyl-CoA but also has some activity on the (R)-isomer. Also has methylmalonyl-CoA decarboxylase activity at lower level. This is Ethylmalonyl-CoA decarboxylase (echdc1) from Xenopus tropicalis (Western clawed frog).